The chain runs to 72 residues: UPF0270 protein YheU (72 aa).

It belongs to the UPF0270 family.

The protein is UPF0270 protein YheU of Escherichia coli (strain ATCC 8739 / DSM 1576 / NBRC 3972 / NCIMB 8545 / WDCM 00012 / Crooks).